Consider the following 1032-residue polypeptide: Toll-like receptor 9 (1032 aa).

The signal sequence occupies residues 1 to 25 (MGFCRSALHPLSLLVQAIMLAMTLA). The Extracellular segment spans residues 26–818 (LGTLPAFLPC…CLDEALSWDC (793 aa)). A disulfide bridge connects residues Cys35 and Cys45. 47 to 51 (WLFLK) is a DNA binding site. LRR repeat units lie at residues 62–85 (RGNV…DFAH), 87–110 (PSLR…HFPC), 122–147 (VPTL…SLIS), 150–166 (LSHT…LAGL), 167–190 (HALR…ALEV), 198–221 (LGNL…LPSS), 223–242 (EYLL…DLAN), 243–268 (LTAL…CMEC), 283–306 (LSRL…WFRG), 308–332 (GNLR…AFQG), 333–356 (LTQL…HLSL), 363–386 (LVAL…TLRP), 390–413 (LPML…IFRA), and 415–440 (PGLR…MGEA). An N-linked (GlcNAc...) asparagine glycan is attached at Asn64. DNA is bound by residues 72–77 (SNRIHH) and 95–109 (KWNC…MHFP). A disulfide bond links Cys98 and Cys110. N-linked (GlcNAc...) asparagine glycosylation occurs at Asn129. Tyr132 provides a ligand contact to DNA. Residues Cys178 and Cys184 are joined by a disulfide bond. 179–181 (YYK) is a DNA binding site. The N-linked (GlcNAc...) asparagine glycan is linked to Asn200. Tyr208 contacts DNA. 2 N-linked (GlcNAc...) asparagine glycosylation sites follow: Asn210 and Asn242. 2 disulfide bridges follow: Cys255–Cys268 and Cys258–Cys265. 2 S-palmitoyl cysteine lipidation sites follow: Cys258 and Cys265. Asn300 is a glycosylation site (N-linked (GlcNAc...) asparagine). Residue Asn340 is glycosylated (N-linked (GlcNAc...) asparagine). N-linked (GlcNAc...) asparagine glycosylation is found at Asn469, Asn474, and Asn513. LRR repeat units lie at residues 470-494 (CSTL…MFAQ), 496-519 (SHLQ…QFLP), 520-543 (LTGL…SFTE), 545-572 (PRLE…SFVA), 574-598 (LRTL…LCST), 600-622 (LRAL…LYLH), 627-650 (LSGL…TLRN), 652-675 (PKSL…SLHF), 676-699 (LPKL…SLPA), 701-723 (TRLR…FFSK), 724-747 (AKEL…WFGP), and 749-772 (ASAL…AFMD). A disulfide bond links Cys470 and Cys500. N-linked (GlcNAc...) asparagine glycosylation occurs at Asn567. N-linked (GlcNAc...) asparagine glycosylation occurs at Asn694. N-linked (GlcNAc...) asparagine glycosylation is present at Asn731. 2 disulfide bridges follow: Cys764-Cys790 and Cys766-Cys809. A helical transmembrane segment spans residues 819–839 (FALSLLAVALGLGVPMLHHLC). At 840-1032 (GWDLWYCFHL…RNFCQGPTAE (193 aa)) the chain is on the cytoplasmic side. Positions 868–1013 (LPYDAFVVFD…SFWAQLGMAL (146 aa)) constitute a TIR domain.

Belongs to the Toll-like receptor family. In terms of assembly, monomer and homodimer. Exists as a monomer in the absence of unmethylated cytidine-phosphate-guanosine (CpG) ligand. Proteolytic processing of an insertion loop (Z-loop) is required for homodimerization upon binding to the unmethylated CpG ligand leading to its activation. Interacts with MYD88 via their respective TIR domains. Interacts with BTK. Interacts (via transmembrane domain) with UNC93B1. Interacts with CD300LH; the interaction may promote full activation of TLR9-triggered innate responses. Interacts with CNPY3 and HSP90B1; this interaction is required for proper folding in the endoplasmic reticulum. Interacts with SMPDL3B. Interacts with CD82; this interaction is essential for TLR9-dependent myddosome formation in response to CpG stimulation. Activated by proteolytic cleavage of the flexible loop between repeats LRR14 and LRR15 within the ectodomain. Cleavage requires UNC93B1. Proteolytically processed by first removing the majority of the ectodomain by either asparagine endopeptidase (AEP) or a cathepsin followed by a trimming event that is solely cathepsin mediated and required for optimal receptor signaling. In terms of processing, palmitoylated by ZDHHC3 in the Golgi regulates TLR9 trafficking from the Golgi to endosomes. Depalmitoylation by PPT1 controls the release of TLR9 from UNC93B1 in endosomes. Highly expressed in spleen, lymph node, tonsil and peripheral blood leukocytes, especially in plasmacytoid pre-dendritic cells. Levels are much lower in monocytes and CD11c+ immature dendritic cells. Also detected in lung and liver.

The protein localises to the endoplasmic reticulum membrane. The protein resides in the early endosome membrane. Its subcellular location is the lysosome. It localises to the cytoplasmic vesicle. It is found in the phagosome. The protein localises to the golgi apparatus membrane. In terms of biological role, key component of innate and adaptive immunity. TLRs (Toll-like receptors) control host immune response against pathogens through recognition of molecular patterns specific to microorganisms. TLR9 is a nucleotide-sensing TLR which is activated by unmethylated cytidine-phosphate-guanosine (CpG) dinucleotides. Acts via MYD88 and TRAF6, leading to NF-kappa-B activation, cytokine secretion and the inflammatory response. Controls lymphocyte response to Helicobacter infection. Upon CpG stimulation, induces B-cell proliferation, activation, survival and antibody production. The chain is Toll-like receptor 9 (TLR9) from Homo sapiens (Human).